An 82-amino-acid polypeptide reads, in one-letter code: Small ribosomal subunit protein eS21y (82 aa).

Met1 is subject to N-acetylmethionine.

This sequence belongs to the eukaryotic ribosomal protein eS21 family.

This chain is Small ribosomal subunit protein eS21y (RPS21C), found in Arabidopsis thaliana (Mouse-ear cress).